A 148-amino-acid chain; its full sequence is Flavodoxin (148 aa).

One can recognise a Flavodoxin-like domain in the interval 4–145; the sequence is VLILFGSSTG…AVSAFAEDVL (142 aa).

The protein belongs to the flavodoxin family. It depends on FMN as a cofactor.

Low-potential electron donor to a number of redox enzymes. This Desulfovibrio desulfuricans (strain ATCC 27774 / DSM 6949 / MB) protein is Flavodoxin.